The primary structure comprises 393 residues: Small ribosomal subunit protein bS1 (393 aa).

S1 motif domains follow at residues 16–90 (GDKV…LSKR), 108–173 (NQTI…LSRK), 194–262 (GDVI…LSIK), and 279–348 (GDVI…LSIK). The segment covering 356–369 (VIESDSETTQSYLD) has biased composition (polar residues). Residues 356-381 (VIESDSETTQSYLDNGSDDEDNPTLG) are disordered.

Belongs to the bacterial ribosomal protein bS1 family.

Functionally, binds mRNA; thus facilitating recognition of the initiation point. It is needed to translate mRNA with a short Shine-Dalgarno (SD) purine-rich sequence. This chain is Small ribosomal subunit protein bS1 (rpsA), found in Staphylococcus saprophyticus subsp. saprophyticus (strain ATCC 15305 / DSM 20229 / NCIMB 8711 / NCTC 7292 / S-41).